The primary structure comprises 395 residues: Succinate--CoA ligase [ADP-forming] subunit beta (395 aa).

One can recognise an ATP-grasp domain in the interval 9–240 (RDVFEKHGVP…AASADPLEAK (232 aa)). Residues K49, 56–58 (GRG), A98, and E103 contribute to the ATP site. Positions 195 and 209 each coordinate Mg(2+). Substrate-binding positions include N260 and 322–324 (GIT).

This sequence belongs to the succinate/malate CoA ligase beta subunit family. As to quaternary structure, heterotetramer of two alpha and two beta subunits. Mg(2+) serves as cofactor.

It carries out the reaction succinate + ATP + CoA = succinyl-CoA + ADP + phosphate. It catalyses the reaction GTP + succinate + CoA = succinyl-CoA + GDP + phosphate. It functions in the pathway carbohydrate metabolism; tricarboxylic acid cycle; succinate from succinyl-CoA (ligase route): step 1/1. Functionally, succinyl-CoA synthetase functions in the citric acid cycle (TCA), coupling the hydrolysis of succinyl-CoA to the synthesis of either ATP or GTP and thus represents the only step of substrate-level phosphorylation in the TCA. The beta subunit provides nucleotide specificity of the enzyme and binds the substrate succinate, while the binding sites for coenzyme A and phosphate are found in the alpha subunit. The protein is Succinate--CoA ligase [ADP-forming] subunit beta of Beutenbergia cavernae (strain ATCC BAA-8 / DSM 12333 / CCUG 43141 / JCM 11478 / NBRC 16432 / NCIMB 13614 / HKI 0122).